The chain runs to 1227 residues: ATP-dependent helicase/nuclease subunit A (1227 aa).

Residues 37–503 form the UvrD-like helicase ATP-binding domain; the sequence is QKRTAEQIEA…ILLKENFRSQ (467 aa). 58 to 65 contributes to the ATP binding site; that stretch reads ASAGSGKT. The region spanning 532–816 is the UvrD-like helicase C-terminal domain; it reads SLVAGSPGQK…QLMTIHKSKG (285 aa).

Belongs to the helicase family. AddA subfamily. Heterodimer of AddA and AddB/RexB. The cofactor is Mg(2+).

It carries out the reaction Couples ATP hydrolysis with the unwinding of duplex DNA by translocating in the 3'-5' direction.. It catalyses the reaction ATP + H2O = ADP + phosphate + H(+). Functionally, the heterodimer acts as both an ATP-dependent DNA helicase and an ATP-dependent, dual-direction single-stranded exonuclease. Recognizes the chi site generating a DNA molecule suitable for the initiation of homologous recombination. The AddA nuclease domain is required for chi fragment generation; this subunit has the helicase and 3' -&gt; 5' nuclease activities. This Streptococcus suis (strain 98HAH33) protein is ATP-dependent helicase/nuclease subunit A.